The chain runs to 522 residues: Leucine-rich repeat transmembrane neuronal protein 1 (522 aa).

The first 34 residues, 1 to 34, serve as a signal peptide directing secretion; the sequence is MDFLLLGLCLYWLLRRPSGVVLCLLGACFQMLPA. The LRRNT domain maps to 35 to 63; that stretch reads APSGCPQLCRCEGRLLYCEALNPTEAPHN. Residues 35-427 are Extracellular-facing; that stretch reads APSGCPQLCR…HAENAVQIHK (393 aa). A glycan (N-linked (GlcNAc...) asparagine) is linked at Asn-63. 10 LRR repeats span residues 64–87, 89–111, 112–135, 137–159, 161–183, 184–207, 209–231, 233–255, 256–278, and 279–302; these read LSGL…QFTG, MQLT…AFQK, LRRV…TFRP, PNLR…LFHG, RKLT…IFQD, CRSL…SFAG, FKLT…HFPR, ISLH…LDWV, WNLK…VFET, and VPHL…ILNS. An N-linked (GlcNAc...) asparagine glycan is attached at Asn-130. Residues 314–365 enclose the LRRCT domain; it reads NLWDCGRNVCALASWLSNFQGRYDGNLQCASPEYAQGEDVLDAVYAFHLCED. N-linked (GlcNAc...) asparagine glycosylation occurs at Asn-380. Positions 382–401 are disordered; sequence SDLGPPASSATTLADGGEGQ. The helical transmembrane segment at 428–448 threads the bilayer; it reads VVTGTMALIFSFLIVVLVLYV. The Cytoplasmic portion of the chain corresponds to 449-522; it reads SWKCFPASLR…HQQPARECEV (74 aa).

This sequence belongs to the LRRTM family.

It is found in the cell membrane. Its subcellular location is the postsynaptic cell membrane. Its function is as follows. Exhibits strong synaptogenic activity, restricted to excitatory presynaptic differentiation, acting at both pre- and postsynaptic level. This is Leucine-rich repeat transmembrane neuronal protein 1 (LRRTM1) from Pongo abelii (Sumatran orangutan).